Reading from the N-terminus, the 212-residue chain is Acyl-homoserine-lactone synthase (212 aa).

It belongs to the autoinducer synthase family.

It carries out the reaction a fatty acyl-[ACP] + S-adenosyl-L-methionine = an N-acyl-L-homoserine lactone + S-methyl-5'-thioadenosine + holo-[ACP] + H(+). Required for the synthesis of OHHL (N-(3-oxohexanoyl)-L-homoserine lactone), an autoinducer molecule which binds to TraR and thus acts in the control of conjugal transfer. The polypeptide is Acyl-homoserine-lactone synthase (traI) (Rhizobium radiobacter (Agrobacterium tumefaciens)).